The following is a 196-amino-acid chain: Holliday junction branch migration complex subunit RuvA (196 aa).

The interval 1–63 (MYEYFKGIIS…EDAELLYGFA (63 aa)) is domain I. The interval 64 to 142 (TEEEKQLFLS…AADGLAESKA (79 aa)) is domain II. The interval 143–146 (PVQT) is flexible linker. The interval 147 to 196 (VDNQELEEAMEAMLALGYKATELKKIKKFFEGTTDTAENYIKSALKMLVK) is domain III.

Belongs to the RuvA family. Homotetramer. Forms an RuvA(8)-RuvB(12)-Holliday junction (HJ) complex. HJ DNA is sandwiched between 2 RuvA tetramers; dsDNA enters through RuvA and exits via RuvB. An RuvB hexamer assembles on each DNA strand where it exits the tetramer. Each RuvB hexamer is contacted by two RuvA subunits (via domain III) on 2 adjacent RuvB subunits; this complex drives branch migration. In the full resolvosome a probable DNA-RuvA(4)-RuvB(12)-RuvC(2) complex forms which resolves the HJ.

The protein resides in the cytoplasm. Functionally, the RuvA-RuvB-RuvC complex processes Holliday junction (HJ) DNA during genetic recombination and DNA repair, while the RuvA-RuvB complex plays an important role in the rescue of blocked DNA replication forks via replication fork reversal (RFR). RuvA specifically binds to HJ cruciform DNA, conferring on it an open structure. The RuvB hexamer acts as an ATP-dependent pump, pulling dsDNA into and through the RuvAB complex. HJ branch migration allows RuvC to scan DNA until it finds its consensus sequence, where it cleaves and resolves the cruciform DNA. The chain is Holliday junction branch migration complex subunit RuvA from Streptococcus gordonii (strain Challis / ATCC 35105 / BCRC 15272 / CH1 / DL1 / V288).